A 530-amino-acid chain; its full sequence is Arginine--tRNA ligase (530 aa).

The 'HIGH' region motif lies at 113–123 (ANPTGPLHIGH).

Belongs to the class-I aminoacyl-tRNA synthetase family. As to quaternary structure, monomer.

Its subcellular location is the cytoplasm. The catalysed reaction is tRNA(Arg) + L-arginine + ATP = L-arginyl-tRNA(Arg) + AMP + diphosphate. This is Arginine--tRNA ligase from Campylobacter jejuni subsp. doylei (strain ATCC BAA-1458 / RM4099 / 269.97).